Reading from the N-terminus, the 546-residue chain is Chaperonin GroEL (546 aa).

ATP is bound by residues 30–33, K51, 87–91, G415, 478–480, and D494; these read TMGP, DGTTT, and NAA.

It belongs to the chaperonin (HSP60) family. As to quaternary structure, forms a cylinder of 14 subunits composed of two heptameric rings stacked back-to-back. Interacts with the co-chaperonin GroES.

The protein resides in the cytoplasm. It carries out the reaction ATP + H2O + a folded polypeptide = ADP + phosphate + an unfolded polypeptide.. In terms of biological role, together with its co-chaperonin GroES, plays an essential role in assisting protein folding. The GroEL-GroES system forms a nano-cage that allows encapsulation of the non-native substrate proteins and provides a physical environment optimized to promote and accelerate protein folding. This Wolinella succinogenes (strain ATCC 29543 / DSM 1740 / CCUG 13145 / JCM 31913 / LMG 7466 / NCTC 11488 / FDC 602W) (Vibrio succinogenes) protein is Chaperonin GroEL.